Consider the following 185-residue polypeptide: Elongation factor P (185 aa).

Belongs to the elongation factor P family.

It is found in the cytoplasm. It functions in the pathway protein biosynthesis; polypeptide chain elongation. In terms of biological role, involved in peptide bond synthesis. Stimulates efficient translation and peptide-bond synthesis on native or reconstituted 70S ribosomes in vitro. Probably functions indirectly by altering the affinity of the ribosome for aminoacyl-tRNA, thus increasing their reactivity as acceptors for peptidyl transferase. The protein is Elongation factor P of Brevibacillus brevis (strain 47 / JCM 6285 / NBRC 100599).